Reading from the N-terminus, the 146-residue chain is Large ribosomal subunit protein uL15 (146 aa).

Positions 1-58 (MNLSELRPAPGARKKPTRKGQGIGSGLGKTAGKGHKGQNARSGGGVRPGFEGGQMPLQ) are disordered. 2 stretches are compositionally biased toward gly residues: residues 21–31 (QGIGSGLGKTA) and 42–52 (SGGGVRPGFEG).

Belongs to the universal ribosomal protein uL15 family. As to quaternary structure, part of the 50S ribosomal subunit.

Functionally, binds to the 23S rRNA. This Desulforamulus reducens (strain ATCC BAA-1160 / DSM 100696 / MI-1) (Desulfotomaculum reducens) protein is Large ribosomal subunit protein uL15.